A 227-amino-acid polypeptide reads, in one-letter code: Cytochrome c oxidase subunit 2 (227 aa).

Residues 1–14 (MAYPFQLGFQDATS) are Mitochondrial intermembrane-facing. Residues 15-45 (PIMEELLHFHDHALMIVFLISSLVLYLISVM) traverse the membrane as a helical segment. Topologically, residues 46–59 (LTTSLTHTSTMDAQ) are mitochondrial matrix. Residues 60-87 (EVETIWTILPAMILIMIALPSLRILYMM) traverse the membrane as a helical segment. The Mitochondrial intermembrane portion of the chain corresponds to 88–227 (DEINNPYLTV…YFEKWSSSML (140 aa)). Cu cation is bound by residues His161, Cys196, Glu198, Cys200, His204, and Met207. Glu198 provides a ligand contact to Mg(2+). Position 218 is a phosphotyrosine (Tyr218).

The protein belongs to the cytochrome c oxidase subunit 2 family. Component of the cytochrome c oxidase (complex IV, CIV), a multisubunit enzyme composed of 14 subunits. The complex is composed of a catalytic core of 3 subunits MT-CO1, MT-CO2 and MT-CO3, encoded in the mitochondrial DNA, and 11 supernumerary subunits COX4I, COX5A, COX5B, COX6A, COX6B, COX6C, COX7A, COX7B, COX7C, COX8 and NDUFA4, which are encoded in the nuclear genome. The complex exists as a monomer or a dimer and forms supercomplexes (SCs) in the inner mitochondrial membrane with NADH-ubiquinone oxidoreductase (complex I, CI) and ubiquinol-cytochrome c oxidoreductase (cytochrome b-c1 complex, complex III, CIII), resulting in different assemblies (supercomplex SCI(1)III(2)IV(1) and megacomplex MCI(2)III(2)IV(2)). Found in a complex with TMEM177, COA6, COX18, COX20, SCO1 and SCO2. Interacts with TMEM177 in a COX20-dependent manner. Interacts with COX20. Interacts with COX16. Requires Cu cation as cofactor.

It is found in the mitochondrion inner membrane. The enzyme catalyses 4 Fe(II)-[cytochrome c] + O2 + 8 H(+)(in) = 4 Fe(III)-[cytochrome c] + 2 H2O + 4 H(+)(out). In terms of biological role, component of the cytochrome c oxidase, the last enzyme in the mitochondrial electron transport chain which drives oxidative phosphorylation. The respiratory chain contains 3 multisubunit complexes succinate dehydrogenase (complex II, CII), ubiquinol-cytochrome c oxidoreductase (cytochrome b-c1 complex, complex III, CIII) and cytochrome c oxidase (complex IV, CIV), that cooperate to transfer electrons derived from NADH and succinate to molecular oxygen, creating an electrochemical gradient over the inner membrane that drives transmembrane transport and the ATP synthase. Cytochrome c oxidase is the component of the respiratory chain that catalyzes the reduction of oxygen to water. Electrons originating from reduced cytochrome c in the intermembrane space (IMS) are transferred via the dinuclear copper A center (CU(A)) of subunit 2 and heme A of subunit 1 to the active site in subunit 1, a binuclear center (BNC) formed by heme A3 and copper B (CU(B)). The BNC reduces molecular oxygen to 2 water molecules using 4 electrons from cytochrome c in the IMS and 4 protons from the mitochondrial matrix. This Rousettus leschenaultii (Leschenault's rousette) protein is Cytochrome c oxidase subunit 2 (MT-CO2).